We begin with the raw amino-acid sequence, 526 residues long: Protein DETOXIFICATION 43 (526 aa).

The Cytoplasmic portion of the chain corresponds to 1-36 (MTETGDDLATVKKPIPFLVIFKDLRHVFSRDTTGRE). The helical transmembrane segment at 37 to 57 (ILGIAFPAALALAADPIASLI) threads the bilayer. Over 58 to 59 (DT) the chain is Extracellular. Residues 60–80 (AFVGRLGAVQLAAVGVSIAIF) traverse the membrane as a helical segment. Over 81-170 (NQASRITIFP…NKKEKRTIRT (90 aa)) the chain is Cytoplasmic. Positions 133–166 (ISSPTSNDTNQPQQPPAPDTKSNSGNKSNKKEKR) are disordered. The span at 134–144 (SSPTSNDTNQP) shows a compositional bias: polar residues. Residues 171 to 191 (ASTAMILGLILGLVQAIFLIF) form a helical membrane-spanning segment. The Extracellular segment spans residues 192–215 (SSKLLLGVMGVKPNSPMLSPAHKY). The helical transmembrane segment at 216–236 (LSIRALGAPALLLSLAMQGIF) threads the bilayer. The Cytoplasmic segment spans residues 237-244 (RGFKDTKT). Residues 245 to 267 (PLFATVVADVINIVLDPIFIFVL) form a helical membrane-spanning segment. The Extracellular segment spans residues 268–270 (RLG). A helical membrane pass occupies residues 271–293 (IIGAAIAHVISQYFMTLILFVFL). The Cytoplasmic segment spans residues 294 to 316 (AKKVNLIPPNFGDLQFGRFLKNG). The helical transmembrane segment at 317-337 (LLLLARTIAVTFCQTLAAAMA) threads the bilayer. Topologically, residues 338 to 353 (ARLGTTPMAAFQICLQ) are extracellular. Residues 354–374 (VWLTSSLLNDGLAVAGQAILA) traverse the membrane as a helical segment. The Cytoplasmic segment spans residues 375–396 (CSFAEKDYNKVTAVASRVLQMG). The chain crosses the membrane as a helical span at residues 397–417 (FVLGLGLSVFVGLGLYFGAGV). Residues 418–426 (FSKDPAVIH) are Extracellular-facing. The helical transmembrane segment at 427-447 (LMAIGIPFIAATQPINSLAFV) threads the bilayer. Over 448–457 (LDGVNFGASD) the chain is Cytoplasmic. A helical transmembrane segment spans residues 458-478 (FAYTAYSMVGVAAISIAAVIY). Over 479-484 (MAKTNG) the chain is Extracellular. The helical transmembrane segment at 485–505 (FIGIWIALTIYMALRAITGIA) threads the bilayer. Over 506–526 (RMATGTGPWRFLRGRSSSSSS) the chain is Cytoplasmic.

The protein belongs to the multi antimicrobial extrusion (MATE) (TC 2.A.66.1) family. As to expression, expressed in roots in the pericycle and cells internal to the pericycle and surrounding the vascular tissue. Also expressed in seed and flower.

The protein localises to the cell membrane. Citrate transporter responsible for loading citrate into xylem tissues, which helps facilitate iron transport to shoots. Mediates the citrate release in the apoplastic spaces during plant development allowing iron nutrition between symplastically disconnected tissues. This is Protein DETOXIFICATION 43 from Arabidopsis thaliana (Mouse-ear cress).